Reading from the N-terminus, the 70-residue chain is Myotoxin (70 aa).

An N-terminal signal peptide occupies residues 1-22 (MKILYLLFAFLFLAFLSEPGNA). Cystine bridges form between cysteine 26/cysteine 58, cysteine 33/cysteine 52, and cysteine 40/cysteine 59.

It belongs to the crotamine-myotoxin family. Monomer. Expressed by the venom gland.

The protein resides in the secreted. Cationic peptide that possesses multiple functions. It acts as a cell-penetrating peptide (CPP), and as a potent voltage-gated potassium channel (Kv) inhibitor. It exhibits antimicrobial activities, hind limb paralysis, and severe muscle necrosis by a non-enzymatic mechanism. The protein is Myotoxin of Crotalus adamanteus (Eastern diamondback rattlesnake).